Consider the following 545-residue polypeptide: Phenylalanine--tRNA ligase beta subunit (545 aa).

Residues 266 to 342 enclose the B5 domain; sequence LSPALRNINV…IGAGFGNLEA (77 aa). The Mg(2+) site is built by D320, D326, E329, and D330.

Belongs to the phenylalanyl-tRNA synthetase beta subunit family. Type 2 subfamily. As to quaternary structure, tetramer of two alpha and two beta subunits. The cofactor is Mg(2+).

It is found in the cytoplasm. The catalysed reaction is tRNA(Phe) + L-phenylalanine + ATP = L-phenylalanyl-tRNA(Phe) + AMP + diphosphate + H(+). This Methanospirillum hungatei JF-1 (strain ATCC 27890 / DSM 864 / NBRC 100397 / JF-1) protein is Phenylalanine--tRNA ligase beta subunit.